A 708-amino-acid chain; its full sequence is uncharacterized protein (708 aa).

4 disordered regions span residues 1–79 (MHAR…RRSS), 119–301 (AGEF…IHQR), 349–390 (YLSH…GDEN), and 410–461 (SNSF…KRQR). The segment covering 65 to 74 (LPPPLPPPPV) has biased composition (pro residues). Residues 238 to 249 (DEAQSKTGSSSA) are compositionally biased toward polar residues. A compositionally biased stretch (low complexity) spans 260–274 (SKVSEGSSSLSAGSG). Polar residues predominate over residues 410–419 (SNSFPSSILR). Residues 442–461 (VGEKRPGEGSDLEEGSKRQR) are compositionally biased toward basic and acidic residues.

This is an uncharacterized protein from Arabidopsis thaliana (Mouse-ear cress).